Here is a 1055-residue protein sequence, read N- to C-terminus: Auxin response factor 16 (1055 aa).

A DNA-binding region (TF-B3) is located at residues Phe-127–Thr-229. Disordered regions lie at residues Pro-485–Ser-510, Gln-532–Ser-565, Ser-585–Gly-609, Ser-701–Met-720, and Ser-732–Leu-769. 2 stretches are compositionally biased toward low complexity: residues Ser-488–Ser-510 and Gln-532–Leu-552. Residues Pro-742–Ile-756 show a composition bias toward low complexity. The span at Asn-757–Leu-769 shows a compositional bias: polar residues. A PB1 domain is found at Arg-940 to Glu-1024. The interval Leu-1034–Gly-1055 is disordered.

The protein belongs to the ARF family. Homodimers and heterodimers. Expressed in roots, culms, leaves and young panicles.

The protein localises to the nucleus. In terms of biological role, auxin response factors (ARFs) are transcriptional factors that bind specifically to the DNA sequence 5'-TGTCTC-3' found in the auxin-responsive promoter elements (AuxREs). The protein is Auxin response factor 16 (ARF16) of Oryza sativa subsp. japonica (Rice).